We begin with the raw amino-acid sequence, 139 residues long: Nucleoside diphosphate kinase (139 aa).

Residues lysine 10, phenylalanine 58, arginine 86, threonine 92, arginine 103, and asparagine 113 each contribute to the ATP site. Histidine 116 serves as the catalytic Pros-phosphohistidine intermediate.

Belongs to the NDK family. In terms of assembly, homotetramer. It depends on Mg(2+) as a cofactor.

Its subcellular location is the cytoplasm. The catalysed reaction is a 2'-deoxyribonucleoside 5'-diphosphate + ATP = a 2'-deoxyribonucleoside 5'-triphosphate + ADP. The enzyme catalyses a ribonucleoside 5'-diphosphate + ATP = a ribonucleoside 5'-triphosphate + ADP. Major role in the synthesis of nucleoside triphosphates other than ATP. The ATP gamma phosphate is transferred to the NDP beta phosphate via a ping-pong mechanism, using a phosphorylated active-site intermediate. The protein is Nucleoside diphosphate kinase of Phenylobacterium zucineum (strain HLK1).